Reading from the N-terminus, the 311-residue chain is tRNA-cytidine(32) 2-sulfurtransferase (311 aa).

The PP-loop motif motif lies at 45–50 (SGGKDS). Residues Cys-120, Cys-123, and Cys-211 each coordinate [4Fe-4S] cluster.

It belongs to the TtcA family. In terms of assembly, homodimer. Mg(2+) serves as cofactor. Requires [4Fe-4S] cluster as cofactor.

The protein resides in the cytoplasm. It carries out the reaction cytidine(32) in tRNA + S-sulfanyl-L-cysteinyl-[cysteine desulfurase] + AH2 + ATP = 2-thiocytidine(32) in tRNA + L-cysteinyl-[cysteine desulfurase] + A + AMP + diphosphate + H(+). It functions in the pathway tRNA modification. Its function is as follows. Catalyzes the ATP-dependent 2-thiolation of cytidine in position 32 of tRNA, to form 2-thiocytidine (s(2)C32). The sulfur atoms are provided by the cysteine/cysteine desulfurase (IscS) system. This is tRNA-cytidine(32) 2-sulfurtransferase from Shewanella pealeana (strain ATCC 700345 / ANG-SQ1).